A 533-amino-acid chain; its full sequence is MTKAPVAPVVLVILDGWGYCEETRGNAIAAAKTPVMESLWTAYPHTLIHTSGKAVGLPEGQMGNSEVGHLNIGAGRVVPQELVRISDAVEDGSILSNSALVKICQEVRNRNGKLHLVGLCSEGGVHSHITHLFGLLDLAKEQRISEVCIHAITDGRDTAPTDGINAISALEDYINHVGIGRIVTVSGRYYAMDRDRRWDRIQRAYDVMTQDGAGDGRKAVDVLQASYAEGVNDEFIVPVRIAPGTVESGDGVIFFNFRPDRSRQLTQAFVSPEFTGFARQQIKPLSFVTFTQYDSDLSVSVAFEPQNLTNILGEVIANQGLNQFRTAETEKYAHVTYFFNGGLEEPFAGEDRELVSSPMVATYDKAPAMSATAVTDTAIAAIQKGIYSLIVINYANPDMVGHTGQIEPTIQAIETVDRCLGRLLEGVSKAGGTTIITADHGNAEYMLDEAGNSWTAHTTNPVPLILVEGEKVKIPGYGTNVELRSDGKLADIAPTILDILQLPQPPEMTGRSLLQPAEYDVQSPRTRIPVGLN.

Mn(2+) is bound by residues Asp-15 and Ser-65. Ser-65 serves as the catalytic Phosphoserine intermediate. Substrate-binding positions include His-126, 156–157 (RD), Arg-188, Arg-194, 258–261 (RPDR), and Lys-331. Asp-398, His-402, Asp-439, His-440, and His-457 together coordinate Mn(2+).

Belongs to the BPG-independent phosphoglycerate mutase family. Monomer. Requires Mn(2+) as cofactor.

It catalyses the reaction (2R)-2-phosphoglycerate = (2R)-3-phosphoglycerate. The protein operates within carbohydrate degradation; glycolysis; pyruvate from D-glyceraldehyde 3-phosphate: step 3/5. In terms of biological role, catalyzes the interconversion of 2-phosphoglycerate and 3-phosphoglycerate. The protein is 2,3-bisphosphoglycerate-independent phosphoglycerate mutase of Trichormus variabilis (strain ATCC 29413 / PCC 7937) (Anabaena variabilis).